Consider the following 142-residue polypeptide: Large ribosomal subunit protein bL17 (142 aa).

It belongs to the bacterial ribosomal protein bL17 family. Part of the 50S ribosomal subunit. Contacts protein L32.

This Chlamydia felis (strain Fe/C-56) (Chlamydophila felis) protein is Large ribosomal subunit protein bL17.